The following is a 412-amino-acid chain: Multifunctional CCA protein (412 aa).

2 residues coordinate ATP: Gly-8 and Arg-11. Residues Gly-8 and Arg-11 each contribute to the CTP site. Residues Asp-21 and Asp-23 each coordinate Mg(2+). Arg-91, Arg-137, and Arg-140 together coordinate ATP. Residues Arg-91, Arg-137, and Arg-140 each contribute to the CTP site. Residues Thr-228–Trp-329 enclose the HD domain.

It belongs to the tRNA nucleotidyltransferase/poly(A) polymerase family. Bacterial CCA-adding enzyme type 1 subfamily. In terms of assembly, monomer. Can also form homodimers and oligomers. The cofactor is Mg(2+). Ni(2+) serves as cofactor.

The catalysed reaction is a tRNA precursor + 2 CTP + ATP = a tRNA with a 3' CCA end + 3 diphosphate. It catalyses the reaction a tRNA with a 3' CCA end + 2 CTP + ATP = a tRNA with a 3' CCACCA end + 3 diphosphate. Its function is as follows. Catalyzes the addition and repair of the essential 3'-terminal CCA sequence in tRNAs without using a nucleic acid template. Adds these three nucleotides in the order of C, C, and A to the tRNA nucleotide-73, using CTP and ATP as substrates and producing inorganic pyrophosphate. tRNA 3'-terminal CCA addition is required both for tRNA processing and repair. Also involved in tRNA surveillance by mediating tandem CCA addition to generate a CCACCA at the 3' terminus of unstable tRNAs. While stable tRNAs receive only 3'-terminal CCA, unstable tRNAs are marked with CCACCA and rapidly degraded. The chain is Multifunctional CCA protein from Shigella dysenteriae serotype 1 (strain Sd197).